An 87-amino-acid polypeptide reads, in one-letter code: Small ribosomal subunit protein eS21B (87 aa).

M1 is modified (N-acetylmethionine).

Belongs to the eukaryotic ribosomal protein eS21 family. In terms of assembly, component of the small ribosomal subunit (SSU). Mature yeast ribosomes consist of a small (40S) and a large (60S) subunit. The 40S small subunit contains 1 molecule of ribosomal RNA (18S rRNA) and 33 different proteins (encoded by 57 genes). The large 60S subunit contains 3 rRNA molecules (25S, 5.8S and 5S rRNA) and 46 different proteins (encoded by 81 genes). In terms of processing, N-terminally acetylated by acetyltransferase NatB.

The protein resides in the cytoplasm. Functionally, component of the ribosome, a large ribonucleoprotein complex responsible for the synthesis of proteins in the cell. The small ribosomal subunit (SSU) binds messenger RNAs (mRNAs) and translates the encoded message by selecting cognate aminoacyl-transfer RNA (tRNA) molecules. The large subunit (LSU) contains the ribosomal catalytic site termed the peptidyl transferase center (PTC), which catalyzes the formation of peptide bonds, thereby polymerizing the amino acids delivered by tRNAs into a polypeptide chain. The nascent polypeptides leave the ribosome through a tunnel in the LSU and interact with protein factors that function in enzymatic processing, targeting, and the membrane insertion of nascent chains at the exit of the ribosomal tunnel. eS21 is required for the processing of the 20S rRNA-precursor to mature 18S rRNA in a late step of the maturation of 40S ribosomal subunits. Has a physiological role leading to 18S rRNA stability. In Saccharomyces cerevisiae (strain ATCC 204508 / S288c) (Baker's yeast), this protein is Small ribosomal subunit protein eS21B.